The sequence spans 163 residues: Putative C-type lectin protein FPV239 (163 aa).

The region spanning 48–159 (CKEGWVGYNK…CFLPKKWICR (112 aa)) is the C-type lectin domain. 2 disulfide bridges follow: Cys-76–Cys-158 and Cys-137–Cys-150.

The chain is Putative C-type lectin protein FPV239 from Fowlpox virus (strain NVSL) (FPV).